Reading from the N-terminus, the 226-residue chain is uncharacterized protein (226 aa).

The protein belongs to the SSM1 family.

This is an uncharacterized protein from Schizosaccharomyces pombe (strain 972 / ATCC 24843) (Fission yeast).